Consider the following 1029-residue polypeptide: U2 snRNP-associated SURP motif-containing protein (1029 aa).

Disordered regions lie at residues 1–111 (MADK…EDEK) and 141–274 (VNAA…PSTT). N-acetylalanine is present on Ala2. A compositionally biased stretch (polar residues) spans 7-16 (GGSQKASSKT). Basic residues predominate over residues 45-54 (TRPKSPRKHN). Residues 55–64 (YRNESARESL) show a composition bias toward basic and acidic residues. Ser67 bears the Phosphoserine mark. Residue Lys80 forms a Glycyl lysine isopeptide (Lys-Gly) (interchain with G-Cter in SUMO2) linkage. Positions 92–121 (AKRTLSKKEQEELKKKEDEKAAAEIYEEFL) form a coiled coil. 2 stretches are compositionally biased toward basic and acidic residues: residues 97-111 (SKKE…EDEK) and 144-155 (AKEEHETDEKRG). Residues Lys145 and Lys168 each participate in a glycyl lysine isopeptide (Lys-Gly) (interchain with G-Cter in SUMO2) cross-link. A compositionally biased stretch (polar residues) spans 169–178 (NPPNQSSNER). Basic and acidic residues predominate over residues 186–222 (ETKKPPLKKGEKEKKKSNLELFKEELKQIQEERDERH). Residues 192–232 (LKKGEKEKKKSNLELFKEELKQIQEERDERHKTKGRLSRFE) are a coiled coil. Residue Ser202 is modified to Phosphoserine. A Glycyl lysine isopeptide (Lys-Gly) (interchain with G-Cter in SUMO2) cross-link involves residue Lys208. Ser236 is subject to Phosphoserine. A compositionally biased stretch (basic and acidic residues) spans 239 to 249 (DGQRRSMDAPS). In terms of domain architecture, RRM spans 274 to 355 (TNLYLGNINP…FEMKLGWGKA (82 aa)). Residues 430–473 (LIHRMIEFVVREGPMFEAMIMNREINNPMFRFLFENQTPAHVYY) form an SURP motif repeat. A Phosphoserine modification is found at Ser485. The region spanning 534 to 679 (LKEEQRDKLE…KLQNIFLGLV (146 aa)) is the CID domain. Phosphothreonine is present on Thr719. Residues Lys748 and Lys749 each participate in a glycyl lysine isopeptide (Lys-Gly) (interchain with G-Cter in SUMO2) cross-link. At Lys760 the chain carries N6-acetyllysine; alternate. Lys760 is covalently cross-linked (Glycyl lysine isopeptide (Lys-Gly) (interchain with G-Cter in SUMO2); alternate). Disordered regions lie at residues 778–841 (KWEL…EEKR) and 855–1029 (QDEL…KNKH). Over residues 786-806 (EESEEEENQNQEEESEDEEDT) the composition is skewed to acidic residues. Phosphoserine occurs at positions 788, 800, and 811. Basic and acidic residues-rich tracts occupy residues 810–841 (KSEE…EEKR) and 874–922 (QVEH…TPTR). Residues Lys822, Lys829, and Lys832 each participate in a glycyl lysine isopeptide (Lys-Gly) (interchain with G-Cter in SUMO2) cross-link. Residues 837–915 (SEEKRAKLRE…ESRSKDKKEK (79 aa)) adopt a coiled-coil conformation. Residue Thr931 is modified to Phosphothreonine. Phosphoserine is present on residues Ser946 and Ser948. A compositionally biased stretch (basic and acidic residues) spans 950 to 980 (KSERSERSERSHKESSRSRSSHKDSPRDVSK). The segment covering 991–1029 (TPKRSRRSRSRSPKKSGKKSRSQSRSPHRSHKKSKKNKH) has biased composition (basic residues).

Belongs to the splicing factor SR family. Interacts with ERBB4.

Its subcellular location is the nucleus. This chain is U2 snRNP-associated SURP motif-containing protein (U2SURP), found in Homo sapiens (Human).